Reading from the N-terminus, the 382-residue chain is MLVVKADYKKYPIPVLEKMRIDEDEFYKKYEACVVVQTCNRIEAYFDTEVNSDIDCILNDFSGFDVLKGKTATFHFLRVSCGMESMILGENQILGQIKTSFQKARELKKTSRYLDGLFLKAIHVGQRARTETKINEGGVSIGSAAVELAEKNFGLTNRNVLLIGAGEMGTLVAKALLEKHIKAVIVSNRTYERAETLAEELKGIAVHFDKLKEAINFSDVIICATSSPHYILKKEDLNDVGNKIIIDIANPRDVDDAVREFENIKLYTIDDLRNISDKNIQKRVEEVPAVEKIINEEYEVLMKQIEKINIEEVLKDFNSYVEEIRVKELEKAIKLSKTKNPEEIMENFSKAFVKRITHDFVSYSINTSKEDLMNSAWWKNGK.

Substrate is bound by residues 38 to 41 (TCNR), S85, 90 to 92 (ENQ), and Q96. The active-site Nucleophile is C39. Residue 164–169 (GAGEMG) participates in NADP(+) binding.

Belongs to the glutamyl-tRNA reductase family. In terms of assembly, homodimer.

It catalyses the reaction (S)-4-amino-5-oxopentanoate + tRNA(Glu) + NADP(+) = L-glutamyl-tRNA(Glu) + NADPH + H(+). The protein operates within porphyrin-containing compound metabolism; protoporphyrin-IX biosynthesis; 5-aminolevulinate from L-glutamyl-tRNA(Glu): step 1/2. In terms of biological role, catalyzes the NADPH-dependent reduction of glutamyl-tRNA(Glu) to glutamate 1-semialdehyde (GSA). The protein is Glutamyl-tRNA reductase of Methanococcus maripaludis (strain C6 / ATCC BAA-1332).